A 489-amino-acid chain; its full sequence is Glutamate--tRNA ligase (489 aa).

Positions 11 to 21 match the 'HIGH' region motif; it reads PSPTGHLHIGG. Zn(2+) contacts are provided by C108, C110, C136, and H138. The short motif at 253–257 is the 'KMSKS' region element; the sequence is KLSKR. Residue K256 coordinates ATP.

The protein belongs to the class-I aminoacyl-tRNA synthetase family. Glutamate--tRNA ligase type 1 subfamily. Monomer. Zn(2+) is required as a cofactor.

It is found in the cytoplasm. The enzyme catalyses tRNA(Glu) + L-glutamate + ATP = L-glutamyl-tRNA(Glu) + AMP + diphosphate. Its function is as follows. Catalyzes the attachment of glutamate to tRNA(Glu) in a two-step reaction: glutamate is first activated by ATP to form Glu-AMP and then transferred to the acceptor end of tRNA(Glu). This Geobacillus thermodenitrificans (strain NG80-2) protein is Glutamate--tRNA ligase.